A 772-amino-acid chain; its full sequence is DnaJ homolog subfamily C member 16 (772 aa).

The N-terminal stretch at 1-25 (MELKRLGVSWRFLMVLVLILQSLSA) is a signal peptide. The Cytoplasmic segment spans residues 26 to 533 (LDFDPYRVLG…ESLLHSNWRE (508 aa)). A J domain is found at 29-93 (DPYRVLGVSR…EKRTNYDHYG (65 aa)). The Thioredoxin domain maps to 119 to 245 (FDESFFHFPF…LRQFVESLLP (127 aa)). The helical; Anchor for type IV membrane protein transmembrane segment at 534–554 (MMPLLSLIFSALFILFGTVMV) threads the bilayer. The Extracellular segment spans residues 555–772 (QAFSDSNEER…FYIPSWPELD (218 aa)). A disordered region spans residues 560–591 (SNEERESHPADKEEVPEKAGKTEPSFTKESSS). Residues 561 to 580 (NEERESHPADKEEVPEKAGK) are compositionally biased toward basic and acidic residues. Asn-629 carries N-linked (GlcNAc...) asparagine glycosylation.

The protein resides in the endoplasmic reticulum membrane. In terms of biological role, plays an important role in regulating the size of autophagosomes during the formation process. This chain is DnaJ homolog subfamily C member 16 (Dnajc16), found in Mus musculus (Mouse).